Reading from the N-terminus, the 79-residue chain is MSEVADKVKKIVVEHLGVEESKVTPEASFIDDLGADSLDTVELVMAFEEAFGVEIPEDAAEKISTVKDAVEYIEKQKAA.

One can recognise a Carrier domain in the interval 2 to 77; the sequence is SEVADKVKKI…DAVEYIEKQK (76 aa). Ser37 bears the O-(pantetheine 4'-phosphoryl)serine mark.

The protein belongs to the acyl carrier protein (ACP) family. Post-translationally, 4'-phosphopantetheine is transferred from CoA to a specific serine of apo-ACP by AcpS. This modification is essential for activity because fatty acids are bound in thioester linkage to the sulfhydryl of the prosthetic group.

It is found in the cytoplasm. Its pathway is lipid metabolism; fatty acid biosynthesis. In terms of biological role, carrier of the growing fatty acid chain in fatty acid biosynthesis. The protein is Acyl carrier protein of Granulibacter bethesdensis (strain ATCC BAA-1260 / CGDNIH1).